The primary structure comprises 122 residues: Large ribosomal subunit protein bL12 (122 aa).

This sequence belongs to the bacterial ribosomal protein bL12 family. Homodimer. Part of the ribosomal stalk of the 50S ribosomal subunit. Forms a multimeric L10(L12)X complex, where L10 forms an elongated spine to which 2 to 4 L12 dimers bind in a sequential fashion. Binds GTP-bound translation factors.

Its function is as follows. Forms part of the ribosomal stalk which helps the ribosome interact with GTP-bound translation factors. Is thus essential for accurate translation. This is Large ribosomal subunit protein bL12 from Flavobacterium psychrophilum (strain ATCC 49511 / DSM 21280 / CIP 103535 / JIP02/86).